A 77-amino-acid polypeptide reads, in one-letter code: Subtilisin-chymotrypsin inhibitor CI-1C (77 aa).

This sequence belongs to the protease inhibitor I13 (potato type I serine protease inhibitor) family.

Inhibits both subtilisin and chymotrypsin. This Hordeum vulgare (Barley) protein is Subtilisin-chymotrypsin inhibitor CI-1C.